Reading from the N-terminus, the 148-residue chain is MASKRINKELRDLQRDPPVSCSAGPTGDDMFQWQATIMGPADSPFAGGVFLVTIHFPPDYPFKPPKVAFRTKVYHPNINSNGSICLDILKEQWSPALTVSKVLLSICSLLTDPNPDDPLVPEIAHIYKTDRVKYESTAQSWTQKYAMG.

One can recognise a UBC core domain in the interval 1 to 147; the sequence is MASKRINKEL…AQSWTQKYAM (147 aa). Catalysis depends on Cys85, which acts as the Glycyl thioester intermediate.

It belongs to the ubiquitin-conjugating enzyme family. As to quaternary structure, interacts with RGLG3 and RGLG4. As to expression, ubiquitously expressed at very low levels.

It catalyses the reaction S-ubiquitinyl-[E1 ubiquitin-activating enzyme]-L-cysteine + [E2 ubiquitin-conjugating enzyme]-L-cysteine = [E1 ubiquitin-activating enzyme]-L-cysteine + S-ubiquitinyl-[E2 ubiquitin-conjugating enzyme]-L-cysteine.. It participates in protein modification; protein ubiquitination. Its function is as follows. Accepts the ubiquitin from the E1 complex and catalyzes its covalent attachment to other proteins. In Arabidopsis thaliana (Mouse-ear cress), this protein is Ubiquitin-conjugating enzyme E2 30 (UBC30).